Consider the following 603-residue polypeptide: Coagulation factor XII (603 aa).

The signal sequence occupies residues 1 to 18; sequence GRLLLGSLLVSLESALSA. The Fibronectin type-II domain occupies 41–89; that stretch reads VTGEPCYFPFQYNRQLYHHCIHKGRPGPRPWCATTPNFDQDQQWAYCLE. Disulfide bonds link cysteine 46–cysteine 72, cysteine 60–cysteine 87, cysteine 97–cysteine 109, cysteine 103–cysteine 118, cysteine 120–cysteine 129, cysteine 134–cysteine 162, cysteine 160–cysteine 169, cysteine 177–cysteine 188, cysteine 182–cysteine 197, cysteine 199–cysteine 208, cysteine 216–cysteine 294, cysteine 237–cysteine 276, cysteine 265–cysteine 289, cysteine 345–cysteine 472, cysteine 383–cysteine 399, cysteine 391–cysteine 461, cysteine 422–cysteine 425, cysteine 488–cysteine 557, cysteine 520–cysteine 536, and cysteine 547–cysteine 578. The EGF-like 1 domain occupies 93–130; it reads VKDHCSKHNPCQRGGICVNTLSSPHCLCPDHLTGKHCQ. Residues 132–172 form the Fibronectin type-I domain; that stretch reads EKCFEPQLHRFFHENEIWFRTGPAGVAKCHCKGPDAHCKQM. An EGF-like 2 domain is found at 173–209; the sequence is HSQECQTNPCLNGGRCLEVEGHHLCDCPMGYTGPFCD. Residues 216–294 enclose the Kringle domain; the sequence is CYEGRGVSYR…SWEYCDLAQC (79 aa). N-linked (GlcNAc...) asparagine glycans are attached at residues asparagine 248 and asparagine 270. The region spanning 359–602 is the Peptidase S1 domain; it reads IVGGLVALPG…YLTWIQKHTA (244 aa). Histidine 398 (charge relay system) is an active-site residue. A glycan (N-linked (GlcNAc...) asparagine) is linked at asparagine 419. Aspartate 447 acts as the Charge relay system in catalysis. Serine 551 functions as the Charge relay system in the catalytic mechanism.

Belongs to the peptidase S1 family. Interacts with HRG; the interaction, which is enhanced in the presence of zinc ions and inhibited by heparin-binding, inhibits factor XII autoactivation and contact-initiated coagulation. O- and N-glycosylated.

The protein localises to the secreted. The enzyme catalyses Selective cleavage of Arg-|-Ile bonds in factor VII to form factor VIIa and factor XI to form factor XIa.. Activity is promoted in the presence of negatively charged surfaces. In terms of biological role, factor XII is a serum glycoprotein that participates in the initiation of blood coagulation, fibrinolysis, and the generation of bradykinin and angiotensin. Prekallikrein is cleaved by factor XII to form kallikrein, which then cleaves factor XII first to alpha-factor XIIa and then trypsin cleaves it to beta-factor XIIa. Alpha-factor XIIa activates factor XI to factor XIa. The chain is Coagulation factor XII (F12) from Cavia porcellus (Guinea pig).